We begin with the raw amino-acid sequence, 203 residues long: Glycerol-3-phosphate acyltransferase (203 aa).

The next 5 membrane-spanning stretches (helical) occupy residues isoleucine 4–valine 24, valine 56–leucine 76, proline 80–phenylalanine 100, phenylalanine 112–leucine 132, and glycine 138–phenylalanine 158.

It belongs to the PlsY family. In terms of assembly, probably interacts with PlsX.

The protein resides in the cell inner membrane. The enzyme catalyses an acyl phosphate + sn-glycerol 3-phosphate = a 1-acyl-sn-glycero-3-phosphate + phosphate. Its pathway is lipid metabolism; phospholipid metabolism. Functionally, catalyzes the transfer of an acyl group from acyl-phosphate (acyl-PO(4)) to glycerol-3-phosphate (G3P) to form lysophosphatidic acid (LPA). This enzyme utilizes acyl-phosphate as fatty acyl donor, but not acyl-CoA or acyl-ACP. The chain is Glycerol-3-phosphate acyltransferase from Enterobacter sp. (strain 638).